The sequence spans 130 residues: Small ribosomal subunit protein uS8B (130 aa).

Belongs to the universal ribosomal protein uS8 family. Component of the small ribosomal subunit (SSU). Mature yeast ribosomes consist of a small (40S) and a large (60S) subunit. The 40S small subunit contains 1 molecule of ribosomal RNA (18S rRNA) and 33 different proteins (encoded by 57 genes). The large 60S subunit contains 3 rRNA molecules (25S, 5.8S and 5S rRNA) and 46 different proteins (encoded by 81 genes).

The protein resides in the cytoplasm. In terms of biological role, component of the ribosome, a large ribonucleoprotein complex responsible for the synthesis of proteins in the cell. The small ribosomal subunit (SSU) binds messenger RNAs (mRNAs) and translates the encoded message by selecting cognate aminoacyl-transfer RNA (tRNA) molecules. The large subunit (LSU) contains the ribosomal catalytic site termed the peptidyl transferase center (PTC), which catalyzes the formation of peptide bonds, thereby polymerizing the amino acids delivered by tRNAs into a polypeptide chain. The nascent polypeptides leave the ribosome through a tunnel in the LSU and interact with protein factors that function in enzymatic processing, targeting, and the membrane insertion of nascent chains at the exit of the ribosomal tunnel. The chain is Small ribosomal subunit protein uS8B from Saccharomyces cerevisiae (strain ATCC 204508 / S288c) (Baker's yeast).